The chain runs to 243 residues: tRNA (guanine-N(1)-)-methyltransferase (243 aa).

S-adenosyl-L-methionine contacts are provided by residues G111 and 130–135; that span reads IGDYVL.

Belongs to the RNA methyltransferase TrmD family. As to quaternary structure, homodimer.

Its subcellular location is the cytoplasm. The enzyme catalyses guanosine(37) in tRNA + S-adenosyl-L-methionine = N(1)-methylguanosine(37) in tRNA + S-adenosyl-L-homocysteine + H(+). Functionally, specifically methylates guanosine-37 in various tRNAs. The sequence is that of tRNA (guanine-N(1)-)-methyltransferase from Acholeplasma laidlawii (strain PG-8A).